A 519-amino-acid polypeptide reads, in one-letter code: Probable U3 small nucleolar RNA-associated protein 18 (519 aa).

WD repeat units follow at residues 26–66 (DKEN…MFDT), 71–111 (GAKD…RLMI), 216–254 (SHSGIRCMSIHPYFPLLLTCGFDRTLRIYQLDGKVNPLV), 259–298 (LRSSALQTALFHPDGKRVIAAGRRKYMYIWDLESAQVQKV), 306–345 (NFQPSMERFHVDPTGKYIALEGRSGHINLLHALTGQFATS), 347–386 (KIEGVLSDVLFTSDGSEMLVLSYGAEVWHFNVEQRSVVRR), 390–429 (QDGVSTTHFCLDPSNKYLAIGSKSGIVNIYDLQTSNADAA), 438–479 (NITF…VFRN), and 485–519 (TPLGRVTCLAFGKGGELCVGNEAGRVGLWKLAHYD).

The protein belongs to the WD repeat UTP18 family. Component of the ribosomal small subunit (SSU) processome.

It localises to the nucleus. It is found in the nucleolus. Functionally, involved in nucleolar processing of pre-18S ribosomal RNA. The polypeptide is Probable U3 small nucleolar RNA-associated protein 18 (Schizosaccharomyces pombe (strain 972 / ATCC 24843) (Fission yeast)).